We begin with the raw amino-acid sequence, 929 residues long: MGDMRDHEEVLEIPDRDSEEELENIIGQIAYRDLTIPVTEMQDPEALPTEQTATDYVPSSTSTPHPSSGQVYVELQELMMDQRNQELQWVEAAHWIGLEENLREDGVWGRPHLSYLTFWSLLELQKVFSKGTFLLGLAETSLAGVANHLLDCFIYEDQIRPQDREELLRALLLKRSHAEDLGNLEGVKPAVLTRSGGASEPLLPHQPSLETQLYCGQAEGGSEGPSTSGTLKIPPDSETTLVLVGRANFLEKPVLGFVRLKEAVPLEDLVLPEPVGFLLVLLGPEAPHVDYTQLGRAAATLMTERVFRITASMAHNREELLRSLESFLDCSLVLPPTDAPSEKALLNLVPVQKELLRRRYLPSPAKPDPNLYNTLDLNGGKGGPGDEDDPLRRTGRIFGGLIRDIRRRYPYYLSDITDALSPQVLAAVIFIYFAALSPAVTFGGLLGEKTRNLMGVSELLISTAVQGILFALLGAQPLLVLGFSGPLLVFEEAFFSFCESNNLEYIVGRAWIGFWLILLVMLVVAFEGSFLVQYISRYTQEIFSFLISLIFIYETFSKLIKIFQDYPLQQTYAPVVMKPKPQGPVPNTALFSLVLMAGTFLLAMTLRKFKNSTYFPGKLRRVIGDFGVPISILIMVLVDSFIKGTYTQKLSVPDGLKVSNSSARGWVIHPLGLYRLFPTWMMFASVLPALLVFILIFLESQITTLIVSKPERKMIKGSGFHLDLLLVVGMGGVAALFGMPWLSATTVRSVTHANALTVMGKASGPGAAAQIQEVKEQRISGLLVSVLVGLSILMEPILSRIPLAVLFGIFLYMGVTSLSGIQLFDRILLLFKPPKYHPDVPFVKRVKTWRMHLFTGIQIICLAVLWVVKSTPASLALPFVLILTVPLRRLILPLIFRELELQCLDGDDAKVTFDEENGLDEYDEVPMPV.

N-acetylmethionine is present on M1. The Cytoplasmic segment spans residues 1–422 (MGDMRDHEEV…LSDITDALSP (422 aa)). At S18 the chain carries Phosphoserine. 2 positions are modified to phosphotyrosine: Y31 and Y56. A disordered region spans residues 46 to 67 (ALPTEQTATDYVPSSTSTPHPS). Over residues 58–67 (PSSTSTPHPS) the composition is skewed to low complexity. The globular stretch occupies residues 69–303 (GQVYVELQEL…LGRAAATLMT (235 aa)). The interval 190–199 (AVLTRSGGAS) is interaction with ANK1. Phosphoserine occurs at positions 199, 222, and 363. The dimerization arm stretch occupies residues 317-370 (REELLRSLESFLDCSLVLPPTDAPSEKALLNLVPVQKELLRRRYLPSPAKPDPN). Positions 366 to 389 (KPDPNLYNTLDLNGGKGGPGDEDD) are disordered. Y372 carries the phosphotyrosine modification. A Phosphothreonine modification is found at T374. A helical membrane pass occupies residues 423 to 446 (QVLAAVIFIYFAALSPAVTFGGLL). The Extracellular portion of the chain corresponds to 447 to 454 (GEKTRNLM). Residues 455–475 (GVSELLISTAVQGILFALLGA) form a helical membrane-spanning segment. The Cytoplasmic portion of the chain corresponds to 476 to 478 (QPL). Residues 479 to 495 (LVLGFSGPLLVFEEAFF) form a discontinuously helical membrane-spanning segment. The Extracellular portion of the chain corresponds to 496 to 504 (SFCESNNLE). The helical transmembrane segment at 505-525 (YIVGRAWIGFWLILLVMLVVA) threads the bilayer. At 526–537 (FEGSFLVQYISR) the chain is on the cytoplasmic side. The chain crosses the membrane as a helical span at residues 538 to 560 (YTQEIFSFLISLIFIYETFSKLI). The Extracellular segment spans residues 561–588 (KIFQDYPLQQTYAPVVMKPKPQGPVPNT). Residues 589–609 (ALFSLVLMAGTFLLAMTLRKF) traverse the membrane as a helical segment. Topologically, residues 610 to 620 (KNSTYFPGKLR) are cytoplasmic. Residues 621 to 641 (RVIGDFGVPISILIMVLVDSF) form a helical membrane-spanning segment. Residues 642 to 681 (IKGTYTQKLSVPDGLKVSNSSARGWVIHPLGLYRLFPTWM) are Extracellular-facing. N660 is a glycosylation site (N-linked (GlcNAc...) asparagine). Residues 682-702 (MFASVLPALLVFILIFLESQI) traverse the membrane as a helical segment. Topologically, residues 703 to 718 (TTLIVSKPERKMIKGS) are cytoplasmic. Residues 719–737 (GFHLDLLLVVGMGGVAALF) traverse the membrane as a helical segment. Residues 738-755 (GMPWLSATTVRSVTHANA) traverse the membrane as a discontinuously helical segment. At 756-778 (LTVMGKASGPGAAAQIQEVKEQR) the chain is on the cytoplasmic side. 2 helical membrane passes run 779–799 (ISGL…PILS) and 800–818 (RIPL…VTSL). At 819 to 856 (SGIQLFDRILLLFKPPKYHPDVPFVKRVKTWRMHLFTG) the chain is on the cytoplasmic side. Positions 857–887 (IQIICLAVLWVVKSTPASLALPFVLILTVPL) form an intramembrane region, discontinuously helical. C861 carries the S-palmitoyl cysteine lipid modification. The Cytoplasmic portion of the chain corresponds to 888–929 (RRLILPLIFRELELQCLDGDDAKVTFDEENGLDEYDEVPMPV). Y922 is modified (phosphotyrosine).

It belongs to the anion exchanger (TC 2.A.31) family. As to quaternary structure, a dimer in solution, but in its membrane environment, it exists primarily as a mixture of dimers and tetramers and spans the membrane asymmetrically. Component of the ankyrin-1 complex in the erythrocyte, composed of ANK1, RHCE, RHAG, SLC4A1, EPB42, GYPA, GYPB and AQP1. Interacts with STOM; this interaction positively regulates SLC4A1 activity. Interacts with GYPA; a GYPA monomer is bound at each end of the SLC4A1 dimer forming a heterotetramer. Three SLC4A1 dimers (Band 3-I, Band 3-II and Band 3-III) participates in the ankyrin-1 complex. Interacts (via the cytoplasmic domain) with EPB42; this interaction is mediated by the SLC4A1 Band 3-I dimer. Interacts (via the cytoplasmic domain) directly with ANK1; this interaction is mediated by the SLC4A1 Band 3-II and Band 3-III dimers. In terms of assembly, interacts with TMEM139. Detected in erythrocytes (at protein level).

It localises to the cell membrane. It is found in the basolateral cell membrane. It catalyses the reaction hydrogencarbonate(in) + chloride(out) = hydrogencarbonate(out) + chloride(in). In terms of biological role, functions both as a transporter that mediates electroneutral anion exchange across the cell membrane and as a structural protein. Component of the ankyrin-1 complex of the erythrocyte membrane; required for normal flexibility and stability of the erythrocyte membrane and for normal erythrocyte shape via the interactions of its cytoplasmic domain with cytoskeletal proteins, glycolytic enzymes, and hemoglobin. Functions as a transporter that mediates the 1:1 exchange of inorganic anions across the erythrocyte membrane. Mediates chloride-bicarbonate exchange in the kidney, and is required for normal acidification of the urine. This Mus musculus (Mouse) protein is Band 3 anion transport protein.